A 712-amino-acid polypeptide reads, in one-letter code: Elongation factor G (712 aa).

Residues 8 to 290 (TRYRNIGISA…AVIEFLPSPT (283 aa)) enclose the tr-type G domain. GTP is bound by residues 17-24 (AHIDAGKT), 88-92 (DTPGH), and 142-145 (NKMD).

Belongs to the TRAFAC class translation factor GTPase superfamily. Classic translation factor GTPase family. EF-G/EF-2 subfamily.

It is found in the cytoplasm. Functionally, catalyzes the GTP-dependent ribosomal translocation step during translation elongation. During this step, the ribosome changes from the pre-translocational (PRE) to the post-translocational (POST) state as the newly formed A-site-bound peptidyl-tRNA and P-site-bound deacylated tRNA move to the P and E sites, respectively. Catalyzes the coordinated movement of the two tRNA molecules, the mRNA and conformational changes in the ribosome. The polypeptide is Elongation factor G (Acinetobacter baumannii (strain AB307-0294)).